A 1138-amino-acid chain; its full sequence is Condensin-2 complex subunit G2 (1138 aa).

S30 carries the post-translational modification Phosphoserine. Residues 459-497 (LLPTLRYSLHDNSEKVRVAFVDLLLKIKAVRAAKFWKIC) form an HEAT repeat. T1114 is subject to Phosphothreonine.

Component of the condensin-2 complex, which contains the SMC2 and SMC4 heterodimer, and 3 non SMC subunits that probably regulate the complex: NCAPH2, NCAPD3 and NCAPG2. As to expression, expressed in spleen, lung and testis as well as in hematopoietic cell lines.

The protein resides in the nucleus. Regulatory subunit of the condensin-2 complex, a complex which establishes mitotic chromosome architecture and is involved in physical rigidity of the chromatid axis. Is required for early embryonic development and is essential for viability and expansion of the inner cell mass (ICM) of the implanting blastocyst. This Mus musculus (Mouse) protein is Condensin-2 complex subunit G2 (Ncapg2).